The chain runs to 161 residues: Nucleotide-binding protein Bpro_1596 (161 aa).

This sequence belongs to the YajQ family.

Its function is as follows. Nucleotide-binding protein. This is Nucleotide-binding protein Bpro_1596 from Polaromonas sp. (strain JS666 / ATCC BAA-500).